The primary structure comprises 84 residues: Large ribosomal subunit protein eL34 (84 aa).

The protein belongs to the eukaryotic ribosomal protein eL34 family.

This is Large ribosomal subunit protein eL34 from Pyrobaculum calidifontis (strain DSM 21063 / JCM 11548 / VA1).